The chain runs to 163 residues: Nucleotide-binding protein APL_1231 (163 aa).

The protein belongs to the YajQ family.

Nucleotide-binding protein. This Actinobacillus pleuropneumoniae serotype 5b (strain L20) protein is Nucleotide-binding protein APL_1231.